The sequence spans 592 residues: Putative esterase (592 aa).

A helical transmembrane segment spans residues 12–32 (LTLIAYLSVLMGVSVYFYVLI). Residues N68, N83, N95, N447, and N510 are each glycosylated (N-linked (GlcNAc...) asparagine; by host). The active-site Charge relay system is the H513. N-linked (GlcNAc...) asparagine; by host glycosylation occurs at N528.

The protein belongs to the type-B carboxylesterase/lipase family.

The protein resides in the membrane. The catalysed reaction is a carboxylic ester + H2O = an alcohol + a carboxylate + H(+). The protein is Putative esterase of Spodoptera frugiperda (Fall armyworm).